The primary structure comprises 476 residues: ATP synthase subunit beta 2 (476 aa).

160–167 lines the ATP pocket; that stretch reads GGAGVGKT.

This sequence belongs to the ATPase alpha/beta chains family. As to quaternary structure, F-type ATPases have 2 components, CF(1) - the catalytic core - and CF(0) - the membrane proton channel. CF(1) has five subunits: alpha(3), beta(3), gamma(1), delta(1), epsilon(1). CF(0) has four main subunits: a(1), b(1), b'(1) and c(9-12).

It localises to the cell inner membrane. The catalysed reaction is ATP + H2O + 4 H(+)(in) = ADP + phosphate + 5 H(+)(out). Functionally, produces ATP from ADP in the presence of a proton gradient across the membrane. The catalytic sites are hosted primarily by the beta subunits. In Bradyrhizobium sp. (strain BTAi1 / ATCC BAA-1182), this protein is ATP synthase subunit beta 2.